Consider the following 558-residue polypeptide: Urocanate hydratase (558 aa).

Residues 54–55, Gln132, 178–180, Glu198, 244–245, 265–269, 275–276, and Tyr324 contribute to the NAD(+) site; these read GG, GMG, NA, QTSAH, and YL. Cys412 is an active-site residue. Residue Gly494 coordinates NAD(+).

It belongs to the urocanase family. NAD(+) is required as a cofactor.

It localises to the cytoplasm. The enzyme catalyses 4-imidazolone-5-propanoate = trans-urocanate + H2O. Its pathway is amino-acid degradation; L-histidine degradation into L-glutamate; N-formimidoyl-L-glutamate from L-histidine: step 2/3. Its function is as follows. Catalyzes the conversion of urocanate to 4-imidazolone-5-propionate. The protein is Urocanate hydratase of Acinetobacter baumannii (strain ACICU).